The chain runs to 1000 residues: Lysine-specific histone demethylase 1 (1000 aa).

Positions 104-123 are disordered; it reads RRPAGRRGRPALNTSNSLER. Residues 107-137 are a coiled coil; it reads AGRRGRPALNTSNSLERNGTRYVSAEAPISV. In terms of domain architecture, SWIRM spans 153–249; the sequence is CYESAIASNL…YGCIYIISSL (97 aa). FAD contacts are provided by residues 260–302, Glu-301, and 328–329; these read VAII…IYEA and LA. Residues 279 to 950 form a demethylase activity region; that stretch reads LFAQYEQDFL…RCESQPIPED (672 aa). Positions 434–529 form a coiled coil; it reads IGWYISIEAF…ADMLNSLAST (96 aa). Positions 780 to 800 are disordered; sequence TYGTKRNAQQALGKEGERENK. A DNA-binding region (HMG box) is located at residues 841-921; that stretch reads SRPSANPYLL…NYSTRLEEYQ (81 aa). Position 908 to 909 (908 to 909) interacts with FAD; the sequence is AR. Residues 959 to 972 are compositionally biased toward basic and acidic residues; it reads EQEDEHLHPEKEGM. Positions 959–1000 are disordered; that stretch reads EQEDEHLHPEKEGMSVENSDDDYHDDLDYEDSISEVFPDNFS. Residues 976–991 are compositionally biased toward acidic residues; the sequence is NSDDDYHDDLDYEDSI.

The protein belongs to the flavin monoamine oxidase family. As to quaternary structure, component of the SWM histone demethylase complex composed of at least lsd1, lsd2, phf1 and phf2. Interacts directly with lsd2. FAD serves as cofactor.

The protein resides in the nucleus. Catalytic component of the SWM histone demethylase complex that specifically demethylates H3K9me2, a specific tag for epigenetic transcriptional activation, thereby acting as a corepressor. Acts by oxidizing the substrate by FAD to generate the corresponding imine that is subsequently hydrolyzed. Has a role in regulating heterochromatin propagation and euchromatic transcription. Also has a gene activating role. The protein is Lysine-specific histone demethylase 1 (lsd1) of Schizosaccharomyces pombe (strain 972 / ATCC 24843) (Fission yeast).